Reading from the N-terminus, the 984-residue chain is Ephrin type-B receptor 1 (984 aa).

Positions 1-17 (MALDCLLLFLLASAVAA) are cleaved as a signal peptide. At 18–540 (MEETLMDTRT…YKSELREQLP (523 aa)) the chain is on the extracellular side. The 183-residue stretch at 19–201 (EETLMDTRTA…FFKKCPSIVQ (183 aa)) folds into the Eph LBD domain. Fibronectin type-III domains follow at residues 322-432 (VPSG…TNQA) and 433-528 (APST…TLTD). Residues N334, N426, and N480 are each glycosylated (N-linked (GlcNAc...) asparagine). The helical transmembrane segment at 541–563 (LIAGSAAAGVVFVVSLVAISIVC) threads the bilayer. At 564 to 984 (SRKRAYSKEA…QMNQSPSVMA (421 aa)) the chain is on the cytoplasmic side. Y600 carries the phosphotyrosine modification. Residues 619-882 (VKIEEVIGAG…EIVNTLDKMI (264 aa)) enclose the Protein kinase domain. ATP is bound by residues 625–633 (IGAGEFGEV) and K651. D744 (proton acceptor) is an active-site residue. The SAM domain occupies 911–975 (TAFTTVDDWL…LSSIHSMRVQ (65 aa)). Y928 carries the phosphotyrosine; by autocatalysis modification. The PDZ-binding motif lies at 982–984 (VMA).

It belongs to the protein kinase superfamily. Tyr protein kinase family. Ephrin receptor subfamily. Heterotetramer upon binding of the ligand. The heterotetramer is composed of an ephrin dimer and a receptor dimer. Oligomerization is probably required to induce biological responses. Interacts with EPHB6; transphosphorylates EPHB6 to form an active signaling complex. Interacts with PICK1. Interacts (through Tyr-594) with NCK1 (via SH2 domain); activates the JUN cascade to regulate cell adhesion. The ligand-activated form interacts (through Tyr-928) with GRB7 and GRB10 (via SH2 domains). The ligand-activated form interacts (residues within the catalytic domain) with GRB2 (via SH2 domain). Interacts with GRB2, SHC1 and SRC; activates the MAPK/ERK cascade to regulate cell migration. Interacts with CBL; regulates receptor degradation through ubiquitination. Interacts with ACP1. Phosphorylated. Autophosphorylation is stimulated by the ligand EFNB1. Required for interaction with SH2 domain-containing interactors, for activation of the MAPK/ERK and JUN signaling cascades and for ubiquitination by CBL. Post-translationally, ubiquitinated; (EFNB1)ligand-induced poly- and/or multi-ubiquitination by CBL is regulated by SRC and leads to lysosomal degradation. In terms of tissue distribution, restricted to brain and testes.

It is found in the cell membrane. Its subcellular location is the early endosome membrane. It localises to the cell projection. The protein resides in the dendrite. The enzyme catalyses L-tyrosyl-[protein] + ATP = O-phospho-L-tyrosyl-[protein] + ADP + H(+). In terms of biological role, receptor tyrosine kinase which binds promiscuously transmembrane ephrin-B family ligands residing on adjacent cells, leading to contact-dependent bidirectional signaling into neighboring cells. The signaling pathway downstream of the receptor is referred to as forward signaling while the signaling pathway downstream of the ephrin ligand is referred to as reverse signaling. Cognate/functional ephrin ligands for this receptor include EFNB1, EFNB2 and EFNB3. During nervous system development, regulates retinal axon guidance redirecting ipsilaterally ventrotemporal retinal ganglion cells axons at the optic chiasm midline. This probably requires repulsive interaction with EFNB2. In the adult nervous system together with EFNB3, regulates chemotaxis, proliferation and polarity of the hippocampus neural progenitors. In addition to its role in axon guidance also plays an important redundant role with other ephrin-B receptors in development and maturation of dendritic spines and synapse formation. May also regulate angiogenesis. More generally, may play a role in targeted cell migration and adhesion. Upon activation by EFNB1 and probably other ephrin-B ligands activates the MAPK/ERK and the JNK signaling cascades to regulate cell migration and adhesion respectively. Involved in the maintenance of the pool of satellite cells (muscle stem cells) by promoting their self-renewal and reducing their activation and differentiation. The chain is Ephrin type-B receptor 1 (Ephb1) from Rattus norvegicus (Rat).